Here is a 68-residue protein sequence, read N- to C-terminus: Small ribosomal subunit protein bS21 (68 aa).

The tract at residues 36–68 (YEKPSEKRARERAAAVRRSRKLERKRAERDGIR) is disordered. Basic and acidic residues predominate over residues 37-49 (EKPSEKRARERAA). Residues 50-59 (AVRRSRKLER) are compositionally biased toward basic residues.

The protein belongs to the bacterial ribosomal protein bS21 family.

This chain is Small ribosomal subunit protein bS21, found in Zymomonas mobilis subsp. mobilis (strain ATCC 31821 / ZM4 / CP4).